The chain runs to 122 residues: Large ribosomal subunit protein uL14 (122 aa).

Belongs to the universal ribosomal protein uL14 family. Part of the 50S ribosomal subunit. Forms a cluster with proteins L3 and L19. In the 70S ribosome, L14 and L19 interact and together make contacts with the 16S rRNA in bridges B5 and B8.

Functionally, binds to 23S rRNA. Forms part of two intersubunit bridges in the 70S ribosome. The sequence is that of Large ribosomal subunit protein uL14 from Carboxydothermus hydrogenoformans (strain ATCC BAA-161 / DSM 6008 / Z-2901).